The following is a 421-amino-acid chain: C2H2 type master regulator of conidiophore development brlA (421 aa).

2 C2H2-type zinc fingers span residues 309 to 333 (FKCKEPGCKGRFKRQEHLKRHMKSH) and 339 to 364 (HVCWVPGCERAFSRSDNLNAHYTKTH). The tract at residues 379–421 (ESSPDYDPDFRGQLTPDGLPIRGSTLDDPMPNSREYSVDGLDD) is disordered.

Its subcellular location is the nucleus. In terms of biological role, brlA, abaA and wetA are pivotal regulators of conidiophore development and conidium maturation. They act individually and together to regulate their own expression and that of numerous other sporulation-specific genes. Binds promoters of target genes at brlA response elements (BREs) containing the conserved sequence 5'-(C/A)(A/G)AGGG(G/A)-3'. Required for conidiophores formation. Controls expression of abaA. The sequence is that of C2H2 type master regulator of conidiophore development brlA from Aspergillus oryzae (strain ATCC 42149 / RIB 40) (Yellow koji mold).